Consider the following 263-residue polypeptide: MEAFWESRTGHWAGGPAPGQFYRVPSTPSCLMDPMSAPARPITRTQNPMVTGTSVLGVKFDCGVVIAADMLGSYGSLARFRNISRIMRVNDSTMLGASGDYADFQYLKQVLGQMVIDEELFGDGHSYSPRAIHSWLTRAMYSRRSKMNPLWNTKVIGGYAGGESFLGYVDMLGVAYEAPSLATGYGAYLAQPLLREVLEKQPVLSQTEARELVERCMRVLYYRDARSYNRFQVATVTEKGVEIEGPLSAQTNWDIAHMISGFE.

Position 1 is an N-acetylmethionine (methionine 1). A propeptide spanning residues 1 to 44 (MEAFWESRTGHWAGGPAPGQFYRVPSTPSCLMDPMSAPARPITR) is cleaved from the precursor. Serine 26 is subject to Phosphoserine. Tyrosine 101 carries the post-translational modification Phosphotyrosine.

This sequence belongs to the peptidase T1B family. In terms of assembly, the 26S proteasome consists of a 20S proteasome core and two 19S regulatory subunits. The 20S proteasome core is a barrel-shaped complex made of 28 subunits that are arranged in four stacked rings. The two outer rings are each formed by seven alpha subunits, and the two inner rings are formed by seven beta subunits. The proteolytic activity is exerted by three beta-subunits PSMB5, PSMB6 and PSMB7. Forms a ternary complex with SMAD1 and OAZ1 before PSMB4 is incorporated into the 20S proteasome. Interacts with PRPF19.

The protein localises to the cytoplasm. Its subcellular location is the nucleus. Non-catalytic component of the 20S core proteasome complex involved in the proteolytic degradation of most intracellular proteins. This complex plays numerous essential roles within the cell by associating with different regulatory particles. Associated with two 19S regulatory particles, forms the 26S proteasome and thus participates in the ATP-dependent degradation of ubiquitinated proteins. The 26S proteasome plays a key role in the maintenance of protein homeostasis by removing misfolded or damaged proteins that could impair cellular functions, and by removing proteins whose functions are no longer required. Associated with the PA200 or PA28, the 20S proteasome mediates ubiquitin-independent protein degradation. This type of proteolysis is required in several pathways including spermatogenesis (20S-PA200 complex) or generation of a subset of MHC class I-presented antigenic peptides (20S-PA28 complex). SMAD1/OAZ1/PSMB4 complex mediates the degradation of the CREBBP/EP300 repressor SNIP1. This chain is Proteasome subunit beta type-4 (Psmb4), found in Rattus norvegicus (Rat).